The primary structure comprises 535 residues: MTILQEVARRRTFAIISHPDAGKTTLTEKLLLFAGAIQIAGSVKARKASRHASSDWMEIEKQRGISVASSVMQMEYRDCVINLLDTPGHQDFSEDTYRVLTAVDAALMVIDAANGVEPQTIRLLQVCRARNTPIITFINKMDREVREPLELLSEIESHLGMDAVPFSWPVGMGKSFGGVFDIRRDRMRLFRPGQERRNDDDEFIDGLSNPQIAERFGQAFEQASGEIELINEAAPAFDHAAFLAGKQTPVFFGSAINNFGVQEVLDALVDLAPQPGARQALEREVKPEEPKFTGVVFKVQANMDPAHRDRVAFVRVSSGRFERGMRLKVARTNKEMRPNNVVSFLSQRRELLDEAYAGDVIGIPNHGVLQLGDVLTEGESLRFTGLPFFAPELFQAVEVKDPLRTKQLRVGLTQLGEEGAIQVFRPEVAGGSLLLGAVGQLQFEVVAHRLKTEYGVEARMLPSRYTMARWITSENPKALRKFMDANAAHIAYDVVDAAAFLIGSSAQLRVAEELYPEVKFHAMREHGGKVFGDTL.

The tr-type G domain maps to 8 to 276 (ARRRTFAIIS…ALVDLAPQPG (269 aa)). GTP contacts are provided by residues 17 to 24 (SHPDAGKT), 85 to 89 (DTPGH), and 139 to 142 (NKMD).

Belongs to the TRAFAC class translation factor GTPase superfamily. Classic translation factor GTPase family. PrfC subfamily.

Its subcellular location is the cytoplasm. Its function is as follows. Increases the formation of ribosomal termination complexes and stimulates activities of RF-1 and RF-2. It binds guanine nucleotides and has strong preference for UGA stop codons. It may interact directly with the ribosome. The stimulation of RF-1 and RF-2 is significantly reduced by GTP and GDP, but not by GMP. The polypeptide is Peptide chain release factor 3 (Bordetella avium (strain 197N)).